We begin with the raw amino-acid sequence, 159 residues long: Phosphopantetheine adenylyltransferase (159 aa).

Substrate is bound at residue threonine 9. ATP is bound by residues 9-10 (TF) and histidine 17. The substrate site is built by lysine 41, leucine 73, and arginine 87. ATP-binding positions include 88–90 (GLR), glutamate 98, and 123–129 (YSFISST).

It belongs to the bacterial CoaD family. As to quaternary structure, homohexamer. Mg(2+) is required as a cofactor.

It is found in the cytoplasm. It catalyses the reaction (R)-4'-phosphopantetheine + ATP + H(+) = 3'-dephospho-CoA + diphosphate. Its pathway is cofactor biosynthesis; coenzyme A biosynthesis; CoA from (R)-pantothenate: step 4/5. Functionally, reversibly transfers an adenylyl group from ATP to 4'-phosphopantetheine, yielding dephospho-CoA (dPCoA) and pyrophosphate. In Pseudomonas putida (strain GB-1), this protein is Phosphopantetheine adenylyltransferase.